The primary structure comprises 521 residues: CDP-diacylglycerol--glycerol-3-phosphate 3-phosphatidyltransferase (521 aa).

91–98 contributes to the ATP binding site; the sequence is ASLYLGKS. PLD phosphodiesterase domains lie at 177-203 and 419-457; these read GLGL…SNDY and NGWS…TRRA. Active-site residues include His182, Lys184, and Asp189.

Belongs to the CDP-alcohol phosphatidyltransferase class-II family.

It is found in the mitochondrion. It carries out the reaction a CDP-1,2-diacyl-sn-glycerol + sn-glycerol 3-phosphate = a 1,2-diacyl-sn-glycero-3-phospho-(1'-sn-glycero-3'-phosphate) + CMP + H(+). It functions in the pathway phospholipid metabolism; phosphatidylglycerol biosynthesis; phosphatidylglycerol from CDP-diacylglycerol: step 1/2. Its function is as follows. Essential for the viability of mitochondrial petite mutant. Catalyzes the committed step to the synthesis of the acidic phospholipids. This is CDP-diacylglycerol--glycerol-3-phosphate 3-phosphatidyltransferase (PGS1) from Saccharomyces cerevisiae (strain ATCC 204508 / S288c) (Baker's yeast).